We begin with the raw amino-acid sequence, 249 residues long: 3-deoxy-D-manno-octulosonic acid kinase (249 aa).

Asp-175 is a catalytic residue.

This sequence belongs to the protein kinase superfamily. KdkA/RfaP family.

It localises to the cell inner membrane. The enzyme catalyses an alpha-Kdo-(2-&gt;6)-lipid IVA + ATP = a 4-O-phospho-alpha-Kdo-(2-&gt;6)-lipid IVA + ADP + H(+). It functions in the pathway bacterial outer membrane biogenesis; LPS core biosynthesis. Functionally, catalyzes the ATP-dependent phosphorylation of the 3-deoxy-D-manno-octulosonic acid (Kdo) residue in Kdo-lipid IV(A) at the 4-OH position. The protein is 3-deoxy-D-manno-octulosonic acid kinase of Xanthomonas axonopodis pv. citri (strain 306).